Here is a 307-residue protein sequence, read N- to C-terminus: Acyl transferase (307 aa).

Residues serine 116, aspartate 213, and histidine 243 each act as charge relay system in the active site.

This sequence belongs to the LuxD family.

Its pathway is lipid metabolism; fatty acid reduction for biolumincescence. Its function is as follows. Acyl transferase is part of the fatty acid reductase system required for aldehyde biosynthesis; it produces fatty acids for the luminescent reaction. The polypeptide is Acyl transferase (Aliivibrio fischeri (strain ATCC 700601 / ES114) (Vibrio fischeri)).